The sequence spans 86 residues: Cell division topological specificity factor (86 aa).

Belongs to the MinE family.

Its function is as follows. Prevents the cell division inhibition by proteins MinC and MinD at internal division sites while permitting inhibition at polar sites. This ensures cell division at the proper site by restricting the formation of a division septum at the midpoint of the long axis of the cell. The polypeptide is Cell division topological specificity factor (Shewanella frigidimarina (strain NCIMB 400)).